The primary structure comprises 214 residues: Response regulator GacA (214 aa).

The Response regulatory domain occupies 3–119 (RVLVVDDHDL…EMVQAIRLVF (117 aa)). Residue aspartate 54 is modified to 4-aspartylphosphate. Positions 143-208 (NNSPFDLLSE…ELALLAVRHG (66 aa)) constitute an HTH luxR-type domain. A DNA-binding region (H-T-H motif) is located at residues 167–186 (VQTISDKLCLSPKTVNTYRY).

Functionally, required for production of extracellular enzymes and fluorescent siderophores. This is Response regulator GacA (gacA) from Pseudomonas viridiflava (Phytomonas viridiflava).